The primary structure comprises 859 residues: MPKWIRSTLNHIIPRRPFICSFNSFLLLKNVSHAKLSFSMSSRGFRSNNFIQAQLKHPSILSKEDLDLLSDSDDWEEPDCIQLETEKQEKKIITDIHKEDPVDKKPMRDKNVMNFINKDSPLSWNDMFKPSIIQPPQLISENSFDQSSQKKSRSTGFKNPLRPALKKESSFDELQNSSISQERSLEMINENEKKKMQFGEKIAVLTQRPSFTELQNDQDDSNLNPHNGVKVKIPICLSKEQESIIKLAENGHNIFYTGSAGTGKSILLREMIKVLKGIYGRENVAVTASTGLAACNIGGITIHSFAGIGLGKGDADKLYKKVRRSRKHLRRWENIGALVVDEISMLDAELLDKLDFIARKIRKNHQPFGGIQLIFCGDFFQLPPVSKDPNRPTKFAFESKAWKEGVKMTIMLQKVFRQRGDVKFIDMLNRMRLGNIDDETEREFKKLSRPLPDDEIIPAELYSTRMEVERANNSRLSKLPGQVHIFNAIDGGALEDEELKERLLQNFLAPKELHLKVGAQVMMVKNLDATLVNGSLGKVIEFMDPETYFCYEALTNDPSMPPEKLETWAENPSKLKAAMEREQSDGEESAVASRKSSVKEGFAKSDIGEPVSPLDSSVFDFMKRVKTDDEVVLENIKRKEQLMQTIHQNSAGKRRLPLVRFKASDMSTRMVLVEPEDWAIEDENEKPLVSRVQLPLMLAWSLSIHKSQGQTLPKVKVDLRRVFEKGQAYVALSRAVSREGLQVLNFDRTRIKAHQKVIDFYLTLSSAESAYKQLEADEQVKKRKLDYAPGPKYKAKSKSKSNSPAPISATTQSNSGIAAMLQRHSRKRFQLKKESNSNQVHSLVSDEPRGQDTEDHILE.

The transit peptide at Met-1–Phe-45 directs the protein to the mitochondrion. A phosphoserine mark is found at Ser-70 and Ser-72. The segment covering Asn-142–Phe-157 has biased composition (polar residues). Positions Asn-142 to Arg-183 are disordered. Ser-169 is subject to Phosphoserine. Over residues Asp-172–Glu-182 the composition is skewed to polar residues. Gly-258–Ser-265 is a binding site for ATP. Ser-584 bears the Phosphoserine mark. Residues Gln-727–Phe-746 mediate DNA binding. Residues Lys-782–Glu-859 are disordered. Low complexity predominate over residues Lys-800 to Ala-809. Basic and acidic residues predominate over residues Val-844–Glu-859.

The protein belongs to the helicase family. PIF1 subfamily. As to quaternary structure, monomer in solution. DNA binding induces dimerization. Associates with mitochondrial and telomeric DNA. Binding to mtDNA is non-specific and the protein seems to coat the entire mtDNA molecule. Binds to the telomerase RNA TLC1. Interacts with the mitochondrial single-strand DNA-binding protein RIM1. Mg(2+) is required as a cofactor. Mn(2+) serves as cofactor. Phosphorylated. Undergoes RAD53-dependent phosphorylation in response to loss of mtDNA.

It is found in the nucleus. The protein localises to the nucleolus. Its subcellular location is the mitochondrion inner membrane. It carries out the reaction Couples ATP hydrolysis with the unwinding of duplex DNA at the replication fork by translocating in the 5'-3' direction. This creates two antiparallel DNA single strands (ssDNA). The leading ssDNA polymer is the template for DNA polymerase III holoenzyme which synthesizes a continuous strand.. The catalysed reaction is ATP + H2O = ADP + phosphate + H(+). Functionally, DNA-dependent ATPase and 5'-3' DNA helicase required for the maintenance of both mitochondrial and nuclear genome stability. Efficiently unwinds G-quadruplex (G4) DNA structures and forked RNA-DNA hybrids. Appears to move along DNA in single nucleotide or base pair steps, powered by hydrolysis of 1 molecule of ATP. Processes at an unwinding rate of about 75 bp/s. Resolves G4 structures, preventing replication pausing and double-strand breaks (DSBs) at G4 motifs. Involved in the maintenance of telomeric DNA. Inhibits telomere elongation, de novo telomere formation and telomere addition to DSBs via catalytic inhibition of telomerase. Reduces the processivity of telomerase by displacing active telomerase from DNA ends. Releases telomerase by unwinding the short telomerase RNA/telomeric DNA hybrid that is the intermediate in the telomerase reaction. Involved in the maintenance of ribosomal (rDNA). Required for efficient fork arrest at the replication fork barrier within rDNA. Involved in the maintenance of mitochondrial (mtDNA). Required to maintain mtDNA under conditions that introduce dsDNA breaks in mtDNA, either preventing or repairing dsDNA breaks. May inhibit replication progression to allow time for repair. May have a general role in chromosomal replication by affecting Okazaki fragment maturation. May have a role in conjunction with DNA2 helicase/nuclease in 5'-flap extension during Okazaki fragment processing. The chain is ATP-dependent DNA helicase PIF1 from Saccharomyces cerevisiae (strain YJM789) (Baker's yeast).